Here is a 152-residue protein sequence, read N- to C-terminus: Complexin (152 aa).

The segment at Met1–Lys119 is disordered. Over residues Asp23–Ala39 the composition is skewed to acidic residues. Composition is skewed to basic and acidic residues over residues Glu41–Glu82 and Asp90–Leu104. The interval Glu59–Leu75 is interaction with the SNARE complex. A Cysteine methyl ester modification is found at Cys149. A lipid anchor (S-farnesyl cysteine) is attached at Cys149. The propeptide at Ser150 to Gln152 is removed in mature form.

The protein belongs to the complexin/synaphin family. In terms of assembly, binds to the SNARE core complex containing SNAP25, synaptobrevin and syntaxin-1.

It localises to the membrane. Its subcellular location is the cytoplasm. The protein localises to the cytosol. Its function is as follows. Positively regulates a late step in synaptic vesicle exocytosis. This Doryteuthis pealeii (Longfin inshore squid) protein is Complexin (cpx).